The primary structure comprises 206 residues: Stage III sporulation protein AF (206 aa).

Helical transmembrane passes span 1–21 (MSFLTEWLTTIVLFILFAIVI) and 34–54 (AKMVVSLLLIVVMLTPIFKLF).

It is found in the cell membrane. The sequence is that of Stage III sporulation protein AF (spoIIIAF) from Bacillus subtilis (strain 168).